The chain runs to 192 residues: 3-isopropylmalate dehydratase small subunit (192 aa).

The protein belongs to the LeuD family. LeuD type 1 subfamily. Heterodimer of LeuC and LeuD.

The enzyme catalyses (2R,3S)-3-isopropylmalate = (2S)-2-isopropylmalate. Its pathway is amino-acid biosynthesis; L-leucine biosynthesis; L-leucine from 3-methyl-2-oxobutanoate: step 2/4. Functionally, catalyzes the isomerization between 2-isopropylmalate and 3-isopropylmalate, via the formation of 2-isopropylmaleate. The chain is 3-isopropylmalate dehydratase small subunit from Oceanobacillus iheyensis (strain DSM 14371 / CIP 107618 / JCM 11309 / KCTC 3954 / HTE831).